The primary structure comprises 259 residues: 5'-nucleotidase SurE (259 aa).

4 residues coordinate a divalent metal cation: Asp-8, Asp-9, Ser-40, and Asn-92.

The protein belongs to the SurE nucleotidase family. A divalent metal cation is required as a cofactor.

The protein resides in the cytoplasm. The enzyme catalyses a ribonucleoside 5'-phosphate + H2O = a ribonucleoside + phosphate. Its function is as follows. Nucleotidase that shows phosphatase activity on nucleoside 5'-monophosphates. This Stenotrophomonas maltophilia (strain K279a) protein is 5'-nucleotidase SurE.